A 415-amino-acid polypeptide reads, in one-letter code: Methylmalonic aciduria type A homolog, mitochondrial (415 aa).

The N-terminal 62 residues, 1–62 (MTISTLLLSP…LLSDGFRRTL (62 aa)), are a transit peptide targeting the mitochondrion. Residues 147 to 155 (GPPGAGKST), Asp289, and 325 to 327 (SAR) each bind GTP.

The protein belongs to the SIMIBI class G3E GTPase family. ArgK/MeaB subfamily. Homodimer. Interacts with MMUT (the apoenzyme form); the interaction is GTP dependent.

It localises to the mitochondrion. It is found in the cytoplasm. The catalysed reaction is GTP + H2O = GDP + phosphate + H(+). Its activity is regulated as follows. GTPase activity is stimulated by MMUT. Its function is as follows. GTPase, binds and hydrolyzes GTP. Involved in intracellular vitamin B12 metabolism, mediates the transport of cobalamin (Cbl) into mitochondria for the final steps of adenosylcobalamin (AdoCbl) synthesis. Functions as a G-protein chaperone that assists AdoCbl cofactor delivery from MMAB to the methylmalonyl-CoA mutase (MMUT). Plays a dual role as both a protectase and a reactivase for MMUT. Protects MMUT from progressive inactivation by oxidation by decreasing the rate of the formation of the oxidized inactive cofactor hydroxocobalamin (OH2Cbl). Additionally acts a reactivase by promoting the replacement of OH2Cbl by the active cofactor AdoCbl, restoring the activity of MMUT in the presence and hydrolysis of GTP. This Mus musculus (Mouse) protein is Methylmalonic aciduria type A homolog, mitochondrial.